Here is a 330-residue protein sequence, read N- to C-terminus: Calponin-3 (330 aa).

N6-acetyllysine is present on lysine 23. A Calponin-homology (CH) domain is found at 26–130; the sequence is QQAEEDLRNW…TLVALAGLAK (105 aa). Position 158 is an N6-methyllysine (lysine 158). Calponin-like repeat units lie at residues 164–189, 204–229, and 243–268; these read IGLQ…RHLY, ISLQ…RDIY, and ISLQ…RQVY. A disordered region spans residues 279-330; sequence PVIHNGSQGTGTNGSEISDSDYQAEYPDEYHGEYPDDYPREYQYGDDQGIDY. Residues 306–318 are compositionally biased toward basic and acidic residues; it reads DEYHGEYPDDYPR.

The protein belongs to the calponin family.

Its function is as follows. Thin filament-associated protein that is implicated in the regulation and modulation of smooth muscle contraction. It is capable of binding to actin, calmodulin and tropomyosin. The interaction of calponin with actin inhibits the actomyosin Mg-ATPase activity. In Mus musculus (Mouse), this protein is Calponin-3 (Cnn3).